The chain runs to 620 residues: KIF-binding protein (620 aa).

Coiled-coil stretches lie at residues Tyr30–Leu64 and Leu133–Asn169.

Belongs to the KIF-binding protein family.

The protein localises to the cytoplasm. Its subcellular location is the cytoskeleton. Activator of KIF1B plus-end-directed microtubule motor activity. Required for organization of axonal microtubules, and axonal outgrowth and maintenance during peripheral and central nervous system development. The protein is KIF-binding protein (kifbp) of Dictyostelium discoideum (Social amoeba).